The primary structure comprises 326 residues: Protein MICROTUBULE BINDING PROTEIN 2C (326 aa).

2 stretches are compositionally biased toward polar residues: residues 1 to 15 (MYEQQQHFMDLQSDS) and 34 to 46 (PHQSAAGTNSGNE). Disordered regions lie at residues 1–46 (MYEQ…SGNE) and 71–132 (ERSS…KALA). Positions 132–183 (AGAEKEEMSRLREQVNDLQTKLSEKEEVLKSMEMSKNQVNEIQEKLEATNRL) form a coiled coil.

Belongs to the microtubule binding protein 2C family. Interacts with STM. In terms of tissue distribution, expressed in seedlings, roots, flowers and developing ovules.

It localises to the cytoplasm. The protein localises to the cytoskeleton. Prevents homeodomain proteins (e.g. STM) association to plasmodesmata and, consequently, cell-to-cell transport. Binds to RNA. Alters STM RNA binding capacity. Regulates cytoskeleton (e.g. actin) organization that determinates cell shape. Regulates stomata patterning and drought tolerance. Involved in restricting tobamovirus (e.g. oilseed rape mosaic virus) infectivity, probably by interfering with cell-to-cell virus movement. This chain is Protein MICROTUBULE BINDING PROTEIN 2C, found in Arabidopsis thaliana (Mouse-ear cress).